Reading from the N-terminus, the 434-residue chain is Elongation factor 1-alpha (434 aa).

The 228-residue stretch at 5–232 (KPHINLVVIG…DNVHPPKRPV (228 aa)) folds into the tr-type G domain. Residues 14–21 (GHVVAGKS) are G1. 14-21 (GHVVAGKS) provides a ligand contact to GTP. The interval 70-74 (GITID) is G2. A G3 region spans residues 91–94 (DAPG). GTP-binding positions include 91–95 (DAPGH) and 153–156 (NKMD). Positions 153 to 156 (NKMD) are G4. Residues 196-198 (SGF) form a G5 region.

Belongs to the TRAFAC class translation factor GTPase superfamily. Classic translation factor GTPase family. EF-Tu/EF-1A subfamily.

It localises to the cytoplasm. Functionally, this protein promotes the GTP-dependent binding of aminoacyl-tRNA to the A-site of ribosomes during protein biosynthesis. This Blastocystis hominis protein is Elongation factor 1-alpha.